The chain runs to 433 residues: Protein MTH1 (433 aa).

The segment at 1–117 (MFVSPPPATS…SRRSSVAESG (117 aa)) is disordered. The span at 9–47 (TSKNQVLQRRPLESTNSNHGFASSLQAIPENTMSGSDNA) shows a compositional bias: polar residues. Over residues 48-64 (SFQSLPLSMSSSQSTTS) the composition is skewed to low complexity. Basic and acidic residues predominate over residues 77–87 (YTDRARDEIKK).

This sequence to yeast STD1/MSN3.

This is Protein MTH1 (MTH1) from Saccharomyces cerevisiae (strain ATCC 204508 / S288c) (Baker's yeast).